A 626-amino-acid polypeptide reads, in one-letter code: tRNA uridine 5-carboxymethylaminomethyl modification enzyme MnmG (626 aa).

13 to 18 serves as a coordination point for FAD; the sequence is GGGHAG. 273-287 lines the NAD(+) pocket; sequence GPRYCPSIEDKIHRF.

Belongs to the MnmG family. As to quaternary structure, homodimer. Heterotetramer of two MnmE and two MnmG subunits. The cofactor is FAD.

It localises to the cytoplasm. In terms of biological role, NAD-binding protein involved in the addition of a carboxymethylaminomethyl (cmnm) group at the wobble position (U34) of certain tRNAs, forming tRNA-cmnm(5)s(2)U34. The protein is tRNA uridine 5-carboxymethylaminomethyl modification enzyme MnmG of Acinetobacter baylyi (strain ATCC 33305 / BD413 / ADP1).